Reading from the N-terminus, the 187-residue chain is Cerebral dopamine neurotrophic factor (187 aa).

The signal sequence occupies residues 1–24 (MRCISPTALVTFCAGFCISNPVLA). Disulfide bonds link cysteine 37–cysteine 124, cysteine 40–cysteine 113, and cysteine 71–cysteine 82.

Belongs to the ARMET family. Expressed at high levels in the heart, skeletal muscle, testis and brain (at protein level). In the brain, detected in the cerebral cortex neurons through layers II to VI. In the hippocampus, detected in the CA1 to CA3 pyramidal regions and in the granule and polymorph layers of dentate gyrus. Weak expression in the striatum. In substantia nigra, detected in solitary cells that did not express tyrosine hydroxylase, a marker for dopaminergic neurons. Relatively high expression in the Purkinje cells of the cerebellum and in regions of the brain stem, including the locus coeruleus.

It localises to the secreted. Trophic factor for dopamine neurons. Prevents the 6-hydroxydopamine (6-OHDA)-induced degeneration of dopaminergic neurons. When administered after 6-OHDA-lesioning, restores the dopaminergic function and prevents the degeneration of dopaminergic neurons in substantia nigra. The chain is Cerebral dopamine neurotrophic factor (Cdnf) from Mus musculus (Mouse).